The following is a 190-amino-acid chain: dCTP deaminase (190 aa).

Position 113–118 (113–118) interacts with dCTP; that stretch reads KSTYAR. Catalysis depends on E139, which acts as the Proton donor/acceptor. The dCTP site is built by Q158, Y172, K181, and Q182.

This sequence belongs to the dCTP deaminase family. As to quaternary structure, homotrimer.

The enzyme catalyses dCTP + H2O + H(+) = dUTP + NH4(+). The protein operates within pyrimidine metabolism; dUMP biosynthesis; dUMP from dCTP (dUTP route): step 1/2. Catalyzes the deamination of dCTP to dUTP. This is dCTP deaminase from Chlamydia felis (strain Fe/C-56) (Chlamydophila felis).